The sequence spans 514 residues: Major facilitator superfamily domain-containing protein 4A (514 aa).

Transmembrane regions (helical) follow at residues 19–39 (LTYWSVFFSFGLCIAFLGPTL), 53–73 (ISWVFLSQQLCLLLGSALGGV), 82–102 (LWALFTSSLAISLVFAVIPFC), 107–127 (VLALVMALAGLAMGCIDTVAN), and 139–159 (AVFLQVLHFFVGFGALLSPLI). Residues N177 and N203 are each glycosylated (N-linked (GlcNAc...) asparagine). 7 consecutive transmembrane segments (helical) span residues 221 to 241 (YAFWIMALINLPVPMAVLMLL), 307 to 327 (FFAIHITAALVLFMTDGLTGA), 347 to 367 (VAGYLPSLFWGFITLGRLLSI), 376 to 396 (ATMVFINVVGVVVTFLVLLIF), 400 to 420 (VVFLFVGTASLGLFLSSTFPS), 438 to 458 (VLVTGAGVGEMVLQMLVGSIF), and 466 to 486 (FLVCGVIFGCLAFTFYILLLF).

The protein belongs to the major facilitator superfamily.

The protein resides in the membrane. In Pongo abelii (Sumatran orangutan), this protein is Major facilitator superfamily domain-containing protein 4A (MFSD4A).